The following is a 202-amino-acid chain: MTRPLVGVLALQGDVREHLAALNDSGADAVGIRRPEELEKIDGLVIPGGESTTMSKLLQIFELLEPLKARLRDGLPAYGSCAGMILLASEILDTRPDAQHLGAIDMTVRRNAFGRQVDSFESDLEFEGIVGDPMRAVFIRAPWVERVGDDVQVLARVPESGGAAAGRIVAVRQGAVVATSFHPEVTGDRRVHELFVDIVRGV.

Gly-49–Ser-51 contacts L-glutamine. Residue Cys-81 is the Nucleophile of the active site. L-glutamine-binding positions include Arg-110 and Ile-139 to Arg-140. Residues His-182 and Glu-184 each act as charge relay system in the active site.

This sequence belongs to the glutaminase PdxT/SNO family. In terms of assembly, in the presence of PdxS, forms a dodecamer of heterodimers. Only shows activity in the heterodimer.

The catalysed reaction is aldehydo-D-ribose 5-phosphate + D-glyceraldehyde 3-phosphate + L-glutamine = pyridoxal 5'-phosphate + L-glutamate + phosphate + 3 H2O + H(+). It catalyses the reaction L-glutamine + H2O = L-glutamate + NH4(+). It participates in cofactor biosynthesis; pyridoxal 5'-phosphate biosynthesis. Its function is as follows. Catalyzes the hydrolysis of glutamine to glutamate and ammonia as part of the biosynthesis of pyridoxal 5'-phosphate. The resulting ammonia molecule is channeled to the active site of PdxS. The polypeptide is Pyridoxal 5'-phosphate synthase subunit PdxT (Rhodococcus jostii (strain RHA1)).